The chain runs to 120 residues: Small ribosomal subunit protein uS13 (120 aa).

Residues 93–120 (GLPVRGQNTKNNARTRKGPRRTVANKKK) form a disordered region. Positions 105 to 120 (ARTRKGPRRTVANKKK) are enriched in basic residues.

Belongs to the universal ribosomal protein uS13 family. As to quaternary structure, part of the 30S ribosomal subunit. Has been shown to cross-link to S19 forming a loose heterodimer. Forms two bridges to the 50S subunit in the 70S ribosome.

In terms of biological role, located at the top of the head of the 30S subunit, it contacts several helices of the 16S rRNA. In the 70S ribosome it contacts the 23S rRNA (bridge B1a) and protein L5 of the 50S subunit (bridge B1b), connecting the 2 subunits; these bridges are implicated in subunit movement. Contacts the tRNA in the A and P-sites. This is Small ribosomal subunit protein uS13 (rpsM) from Geobacillus stearothermophilus (Bacillus stearothermophilus).